The sequence spans 275 residues: Ribosomal RNA small subunit methyltransferase A (275 aa).

The S-adenosyl-L-methionine site is built by Asn-28, Leu-30, Gly-55, Glu-77, Asp-103, and Asn-123.

Belongs to the class I-like SAM-binding methyltransferase superfamily. rRNA adenine N(6)-methyltransferase family. RsmA subfamily.

It is found in the cytoplasm. The catalysed reaction is adenosine(1518)/adenosine(1519) in 16S rRNA + 4 S-adenosyl-L-methionine = N(6)-dimethyladenosine(1518)/N(6)-dimethyladenosine(1519) in 16S rRNA + 4 S-adenosyl-L-homocysteine + 4 H(+). Functionally, specifically dimethylates two adjacent adenosines (A1518 and A1519) in the loop of a conserved hairpin near the 3'-end of 16S rRNA in the 30S particle. May play a critical role in biogenesis of 30S subunits. In Allorhizobium ampelinum (strain ATCC BAA-846 / DSM 112012 / S4) (Agrobacterium vitis (strain S4)), this protein is Ribosomal RNA small subunit methyltransferase A.